A 496-amino-acid polypeptide reads, in one-letter code: MTDLTTLTIAQARYALTKREFKATELTEAYLKAIELANPTLNTYVAITAEQAMKMATESDSRLARGQGGILEGIPLGIKDLFATQGVHTQACSYILDGFKPPYESTVTANLWRDGAIMLGKLNMDEFAMGSSNETSYYGPVINPWRKKGSNEKLVPGGSSGGSAAAVAAQLCAGATATDTGGSIRQPAAFTGTVGIKPTYGRCSRWGVIAFASSLDQAGPIGRNVRDCAILLKSMASFDEKDSTSVNLPVPDYENYIGQSIKGMEIGVPKEYYLEGMASEIVELWQKGINCLKEAGAKIIDISLPHTKYALPAYYIVAPAEASSNLARYDGVRFGLRVPGKDAIEMYENTRSAGFGDEVKRRILIGTYVLSSGYYDAYYLQAQKVRTLVKRDFDQCFASGIDAILTPATPTPAFGIADEKIKNDTVAMYLNDIFTVPVNMAGLPGISVPSGLSSTGLPLGLQLIGKPFAEEVIFQIAHIIEQAIGTFSTEKWWTQQ.

Residues K79 and S159 each act as charge relay system in the active site. The Acyl-ester intermediate role is filled by S183.

Belongs to the amidase family. GatA subfamily. In terms of assembly, heterotrimer of A, B and C subunits.

The catalysed reaction is L-glutamyl-tRNA(Gln) + L-glutamine + ATP + H2O = L-glutaminyl-tRNA(Gln) + L-glutamate + ADP + phosphate + H(+). Allows the formation of correctly charged Gln-tRNA(Gln) through the transamidation of misacylated Glu-tRNA(Gln) in organisms which lack glutaminyl-tRNA synthetase. The reaction takes place in the presence of glutamine and ATP through an activated gamma-phospho-Glu-tRNA(Gln). The polypeptide is Glutamyl-tRNA(Gln) amidotransferase subunit A (Bartonella quintana (strain Toulouse) (Rochalimaea quintana)).